Reading from the N-terminus, the 99-residue chain is Protein NCBP2AS2 (99 aa).

The disordered stretch occupies residues 76–99 (ELRRGLRGRSGPPPGSQRGPGANI).

This Homo sapiens (Human) protein is Protein NCBP2AS2.